The sequence spans 599 residues: DNA-directed RNA polymerase III subunit RPC3 (599 aa).

The tract at residues 335 to 371 is disordered; that stretch reads PRLDGLRPRGKGSRSVSPRPQSKRVKTEEGYTKTGDY. A compositionally biased stretch (basic and acidic residues) spans 359 to 371; the sequence is VKTEEGYTKTGDY. A leucine-zipper region spans residues 526-547; that stretch reads IYKSLSRCFERVAAERAKLPIL.

It belongs to the RNA polymerase beta chain family. As to quaternary structure, component of the RNA polymerase III (Pol III) complex consisting of 17 subunits.

The protein resides in the nucleus. Functionally, DNA-dependent RNA polymerase catalyzes the transcription of DNA into RNA using the four ribonucleoside triphosphates as substrates. Specific core component of RNA polymerase III which synthesizes small RNAs, such as 5S rRNA and tRNAs. This is DNA-directed RNA polymerase III subunit RPC3 (RPC82) from Yarrowia lipolytica (strain CLIB 122 / E 150) (Yeast).